Reading from the N-terminus, the 1494-residue chain is Methyl-CpG-binding domain protein 5 (1494 aa).

Positions 11–81 (DKEGGLPAIQ…KVFNFDPGAA (71 aa)) constitute an MBD domain. Residues 57–68 (DGTCKCGLECPL) form a required for interaction with ASXL1/2/3 region. 8 disordered regions span residues 123–152 (LVLT…RNKS), 200–274 (RQRL…TPLS), 329–350 (HHKP…QKKP), 450–522 (IGRI…KDIP), 594–641 (LAGN…QSGR), 809–848 (PNPP…SSSI), 1154–1173 (HDGR…LDHG), and 1345–1375 (VNGC…SNEL). The span at 333–343 (PQGPPPPPPPS) shows a compositional bias: pro residues. 2 stretches are compositionally biased toward low complexity: residues 499–511 (SPRP…PSTK) and 594–612 (LAGN…AGSG). Polar residues-rich tracts occupy residues 614–624 (TEGHSTLNTMF) and 813–835 (QSRI…YNQT). The span at 836-848 (SSEAGGSGPSSSI) shows a compositional bias: low complexity. Positions 1385–1409 (VGDLVWGQIKGLTSWPGKLVREDDV) constitute a PWWP domain. The tract at residues 1468–1494 (MSGTVHQIPQGDRQMRPPKPKRRKISR) is disordered. Residues 1483–1494 (RPPKPKRRKISR) show a composition bias toward basic residues.

Core component of the polycomb repressive deubiquitinase (PR-DUB) complex, at least composed of BAP1, one of ASXL1, ASXL2 or (probably) ASXL3, and one of MBD5 or MBD6. Distinct combinations of ASXL and MBD proteins may preferentially bind specific histone modification marks. The PR-DUB core associates with a number of accessory proteins, including FOXK1, FOXK2, KDM1B, HCFC1 and OGT; KDM1B specifically associates with ASXL2 PR-DUB complexes. Interacts (via MBD domain) with ASXL1, ASXL2 and ASXL3 (via PHD domain); the interaction is probably direct, mediates association with other PR-DUB complex core components. In terms of tissue distribution, detected in heart, placenta, liver, skeletal muscle, kidney and pancreas.

It localises to the nucleus. It is found in the chromosome. Its function is as follows. Non-catalytic component of the polycomb repressive deubiquitinase (PR-DUB) complex, a complex that specifically mediates deubiquitination of histone H2A monoubiquitinated at 'Lys-120' (H2AK119ub1). Important for stability of PR-DUB components and stimulating its ubiquitinase activity. As part of the PR-DUB complex, associates with chromatin enriched in histone marks H3K4me1, H3K4me3, and H3K27Ac, but not in H3K27me3. The PR-DUB complex is an epigenetic regulator of gene expression, including genes involved in cell growth and survivability. MBD5 and MBD6 containing complexes associate with distinct chromatin regions enriched in genes involved in different pathways. Heterochromatin recruitment is not mediated by DNA methylation. The PR-DUB complex is an epigenetic regulator of gene expression, including genes involved in development, cell communication, signaling, cell proliferation and cell viability. This Homo sapiens (Human) protein is Methyl-CpG-binding domain protein 5 (MBD5).